Reading from the N-terminus, the 406-residue chain is Elongation factor Ts, mitochondrial (406 aa).

The tract at residues 387 to 406 (ARPSDETSFADQVKEAAGLA) is disordered.

This sequence belongs to the EF-Ts family.

The protein resides in the mitochondrion. Functionally, associates with the EF-Tu.GDP complex and induces the exchange of GDP to GTP. It remains bound to the aminoacyl-tRNA.EF-Tu.GTP complex up to the GTP hydrolysis stage on the ribosome. This is Elongation factor Ts, mitochondrial from Malassezia globosa (strain ATCC MYA-4612 / CBS 7966) (Dandruff-associated fungus).